The primary structure comprises 208 residues: Transmembrane protein 160 (208 aa).

Residues 1–45 (MASIRWLMGSRLSRFVCPFAQLVRQPVLRYVRPPVRALHRGSVRR) constitute a mitochondrion transit peptide. Helical transmembrane passes span 82–102 (GFLS…IAFV), 110–130 (AGYA…ASYV), and 147–167 (VLLH…AVSL). Over residues 181 to 192 (DDEEHGADESSE) the composition is skewed to acidic residues. The interval 181–208 (DDEEHGADESSECAECRARRDREKGQDK) is disordered. Basic and acidic residues predominate over residues 194-208 (AECRARRDREKGQDK).

The protein belongs to the TMEM160 family.

Its subcellular location is the mitochondrion inner membrane. The polypeptide is Transmembrane protein 160 (Danio rerio (Zebrafish)).